A 162-amino-acid polypeptide reads, in one-letter code: RNA pyrophosphohydrolase (162 aa).

The Nudix hydrolase domain maps to Lys7 to Glu149. Positions Gly40–Gly61 match the Nudix box motif.

It belongs to the Nudix hydrolase family. RppH subfamily. Requires a divalent metal cation as cofactor.

Its function is as follows. Accelerates the degradation of transcripts by removing pyrophosphate from the 5'-end of triphosphorylated RNA, leading to a more labile monophosphorylated state that can stimulate subsequent ribonuclease cleavage. The chain is RNA pyrophosphohydrolase from Wolbachia sp. subsp. Drosophila simulans (strain wRi).